A 564-amino-acid chain; its full sequence is Alpha-amylase 3 (564 aa).

The signal sequence occupies residues 1 to 21; the sequence is MFGVYFVLLFLSSALIHVANA. Cys-51 and Cys-59 are disulfide-bonded. Substrate-binding residues include Asn-56 and Trp-105. Asn-143 is a binding site for Ca(2+). A disulfide bond links Cys-172 and Cys-188. Asn-181 carries an N-linked (GlcNAc...) asparagine glycan. Asp-198 contacts Ca(2+). Arg-227 lines the substrate pocket. Asp-229 serves as a coordination point for Ca(2+). The Nucleophile role is filled by Asp-229. Residue 232 to 233 participates in substrate binding; the sequence is KM. N-linked (GlcNAc...) asparagine glycosylation is present at Asn-235. A Ca(2+)-binding site is contributed by Glu-253. The Proton donor role is filled by Glu-253. Cys-263 and Cys-306 are disulfide-bonded. Asn-282 and Asn-305 each carry an N-linked (GlcNAc...) asparagine glycan. The substrate site is built by Asp-322 and Arg-369. N-linked (GlcNAc...) asparagine glycans are attached at residues Asn-438, Asn-447, and Asn-498. Ser-538 is lipidated: GPI-anchor amidated serine. Residues 539–564 constitute a propeptide, removed in mature form; the sequence is SSRLILSFKTLVFGLGVTAMLFVLFF.

The protein belongs to the glycosyl hydrolase 13 family. It depends on Ca(2+) as a cofactor. N-glycosylated.

It is found in the cell membrane. The catalysed reaction is Endohydrolysis of (1-&gt;4)-alpha-D-glucosidic linkages in polysaccharides containing three or more (1-&gt;4)-alpha-linked D-glucose units.. In terms of biological role, has a role in cell wall biosynthesis where it is involved in maintaining cell wall strength and shape. The sequence is that of Alpha-amylase 3 (aah3) from Schizosaccharomyces pombe (strain 972 / ATCC 24843) (Fission yeast).